A 171-amino-acid polypeptide reads, in one-letter code: Spiderine-2b (171 aa).

Positions 1-18 are cleaved as a signal peptide; it reads MKFALVLLGFCAFYLVNA. Residues 19–58 constitute a propeptide, removed in mature form; that stretch reads TGDLETELEASDLQELQEALDLIAETPLESLEAEELEEAR. The interval 59 to 104 is linear cationic cytotoxin domain; it reads KFKFPKINWGKLASKAKDVYKKGQKLAKNKNVKKALKYGKQLAENL. Residues 118-171 form the Oxytoxin-type inhibitor cystine knot (ICK) domain; the sequence is NNKCWAIGTRCTDDCDCCPEHHCHCPAKSWTFGLIPCSCQVTESDKVNKCPPAE. 5 disulfide bridges follow: C121/C135, C128/C140, C132/C167, C134/C156, and C142/C154.

This sequence belongs to the spiderine family. Cationic/spiderine subfamily. As to expression, expressed by the venom gland.

The protein localises to the secreted. Has antimicrobial, insecticidal, cytolytic and cytotoxic activity. The protein is Spiderine-2b of Oxyopes takobius (Lynx spider).